A 317-amino-acid chain; its full sequence is Small ribosomal subunit protein RACK1 (317 aa).

7 WD repeats span residues 13-44, 61-91, 103-133, 146-178, 190-220, 231-260, and 281-311; these read GHSG…IMWK, GHSH…RLWD, GHTK…KLWN, GHTE…KVWN, GHTG…MLWD, DSGD…KIWD, and AEPP…RVWQ.

The protein belongs to the WD repeat G protein beta family. Ribosomal protein RACK1 subfamily.

It localises to the cytoplasm. Involved in the recruitment, assembly and/or regulation of a variety of signaling molecules. Interacts with a wide variety of proteins and plays a role in many cellular processes. Required for VANGL2 membrane localization, inhibits Wnt signaling and regulates cellular polarization and oriented cell division during gastrulation. The polypeptide is Small ribosomal subunit protein RACK1 (gnb2l1) (Oreochromis niloticus (Nile tilapia)).